We begin with the raw amino-acid sequence, 105 residues long: Large ribosomal subunit protein eL42 (105 aa).

A disordered region spans residues 28–57; the sequence is YKKGKDSLAAQGKRRYDRKQSGYGGQTKPV.

This sequence belongs to the eukaryotic ribosomal protein eL42 family.

This Gossypium hirsutum (Upland cotton) protein is Large ribosomal subunit protein eL42 (RPL44).